A 269-amino-acid chain; its full sequence is Polyamine aminopropyltransferase (269 aa).

Residues 1 to 226 (MVWFFEYYDG…ALWSFIIGGE (226 aa)) enclose the PABS domain. Position 28 (Gln-28) interacts with S-methyl-5'-thioadenosine. Residues His-59 and Asp-83 each contribute to the spermidine site. S-methyl-5'-thioadenosine-binding positions include Asp-102 and 133–134 (DG). Catalysis depends on Asp-150, which acts as the Proton acceptor. A spermidine-binding site is contributed by 150 to 153 (DSTD).

The protein belongs to the spermidine/spermine synthase family. In terms of assembly, homodimer or homotetramer.

The protein resides in the cytoplasm. It catalyses the reaction S-adenosyl 3-(methylsulfanyl)propylamine + putrescine = S-methyl-5'-thioadenosine + spermidine + H(+). It participates in amine and polyamine biosynthesis; spermidine biosynthesis; spermidine from putrescine: step 1/1. In terms of biological role, catalyzes the irreversible transfer of a propylamine group from the amino donor S-adenosylmethioninamine (decarboxy-AdoMet) to putrescine (1,4-diaminobutane) to yield spermidine. This is Polyamine aminopropyltransferase from Archaeoglobus fulgidus (strain ATCC 49558 / DSM 4304 / JCM 9628 / NBRC 100126 / VC-16).